We begin with the raw amino-acid sequence, 331 residues long: Cytosolic Fe-S cluster assembly factor CFD1 (331 aa).

Position 25-32 (25-32 (GKGGVGKS)) interacts with ATP. Positions 211 and 214 each coordinate [4Fe-4S] cluster.

The protein belongs to the Mrp/NBP35 ATP-binding proteins family. NUBP2/CFD1 subfamily. In terms of assembly, heterotetramer of 2 NBP35 and 2 CFD1 chains. Requires [4Fe-4S] cluster as cofactor.

Its subcellular location is the cytoplasm. Component of the cytosolic iron-sulfur (Fe/S) protein assembly (CIA) machinery. Required for maturation of extramitochondrial Fe-S proteins. The NBP35-CFD1 heterotetramer forms a Fe-S scaffold complex, mediating the de novo assembly of an Fe-S cluster and its transfer to target apoproteins. The polypeptide is Cytosolic Fe-S cluster assembly factor CFD1 (Cryptococcus neoformans var. neoformans serotype D (strain B-3501A) (Filobasidiella neoformans)).